The chain runs to 324 residues: Glyoxylate/hydroxypyruvate reductase B (324 aa).

Residues R237 and E266 contribute to the active site. H285 serves as the catalytic Proton donor.

This sequence belongs to the D-isomer specific 2-hydroxyacid dehydrogenase family. GhrB subfamily. Homodimer.

Its subcellular location is the cytoplasm. It carries out the reaction glycolate + NADP(+) = glyoxylate + NADPH + H(+). The enzyme catalyses (R)-glycerate + NAD(+) = 3-hydroxypyruvate + NADH + H(+). It catalyses the reaction (R)-glycerate + NADP(+) = 3-hydroxypyruvate + NADPH + H(+). Catalyzes the NADPH-dependent reduction of glyoxylate and hydroxypyruvate into glycolate and glycerate, respectively. The chain is Glyoxylate/hydroxypyruvate reductase B from Enterobacter sp. (strain 638).